The following is a 360-amino-acid chain: Phospho-N-acetylmuramoyl-pentapeptide-transferase (360 aa).

The Periplasmic segment spans residues 1-25; that stretch reads MLVWLAEHLVKYYSGFNVFSYLTFR. Residues 26–46 traverse the membrane as a helical segment; the sequence is AIVSLLTALFISLWMGPRMIA. Residues 47–71 lie on the Cytoplasmic side of the membrane; sequence RLQKLSFGQVVRNDGPESHFSKRGT. The chain crosses the membrane as a helical span at residues 72 to 92; that stretch reads PTMGGIMILTAIVISVLLWAY. Position 93 (Pro-93) is a topological domain, periplasmic. A helical membrane pass occupies residues 94-114; that stretch reads SNPYVWCVLVVLIGYGIIGFV. At 115-131 the chain is on the cytoplasmic side; it reads DDYRKVVRKDTKGLIAR. A helical transmembrane segment spans residues 132 to 152; sequence WKYFWMSVIALGVAFALYLVG. Topologically, residues 153–167 are periplasmic; the sequence is KDTPATQLVVPFFKD. The chain crosses the membrane as a helical span at residues 168 to 188; it reads VMPQLGLFYILLSYFVIVGTG. Topologically, residues 189-198 are cytoplasmic; that stretch reads NAVNLTDGLD. Residues 199–219 traverse the membrane as a helical segment; that stretch reads GLAIMPTVFVAAGFALVAWAT. At 220–235 the chain is on the periplasmic side; it reads GNMNFANYLHIPYLRH. Residues 236 to 256 form a helical membrane-spanning segment; the sequence is AGELVIVCTAIVGAGLGFLWF. The Cytoplasmic portion of the chain corresponds to 257–262; the sequence is NTYPAQ. A helical transmembrane segment spans residues 263 to 283; it reads VFMGDVGSLALGGALGIIAVL. Residues 284 to 287 are Periplasmic-facing; that stretch reads LRQE. A helical transmembrane segment spans residues 288 to 308; that stretch reads FLLVIMGGVFVVETLSVILQV. Topologically, residues 309–337 are cytoplasmic; the sequence is GSFKLRGQRIFRMAPIHHHYELKGWPEPR. A helical transmembrane segment spans residues 338 to 358; it reads VIVRFWIISLMLVLIGLATLK. Residues 359-360 lie on the Periplasmic side of the membrane; the sequence is VR.

The protein belongs to the glycosyltransferase 4 family. MraY subfamily. The cofactor is Mg(2+).

It is found in the cell inner membrane. The enzyme catalyses UDP-N-acetyl-alpha-D-muramoyl-L-alanyl-gamma-D-glutamyl-meso-2,6-diaminopimeloyl-D-alanyl-D-alanine + di-trans,octa-cis-undecaprenyl phosphate = di-trans,octa-cis-undecaprenyl diphospho-N-acetyl-alpha-D-muramoyl-L-alanyl-D-glutamyl-meso-2,6-diaminopimeloyl-D-alanyl-D-alanine + UMP. Its pathway is cell wall biogenesis; peptidoglycan biosynthesis. Functionally, catalyzes the initial step of the lipid cycle reactions in the biosynthesis of the cell wall peptidoglycan: transfers peptidoglycan precursor phospho-MurNAc-pentapeptide from UDP-MurNAc-pentapeptide onto the lipid carrier undecaprenyl phosphate, yielding undecaprenyl-pyrophosphoryl-MurNAc-pentapeptide, known as lipid I. This is Phospho-N-acetylmuramoyl-pentapeptide-transferase from Salmonella agona (strain SL483).